The sequence spans 541 residues: Membrane protein insertase YidC (541 aa).

A helical membrane pass occupies residues 6–26 (SLLVLALIFISFLVYQQWQLD). Residues 34–56 (EQTTSITATSDVPASSPSNSQAI) are disordered. A run of 4 helical transmembrane segments spans residues 337–357 (FWLL…IICV), 416–436 (LGGC…YWTF), 454–474 (LSAQ…MFLL), and 495–515 (PLVF…YWLV).

The protein belongs to the OXA1/ALB3/YidC family. Type 1 subfamily. Interacts with the Sec translocase complex via SecD. Specifically interacts with transmembrane segments of nascent integral membrane proteins during membrane integration.

The protein localises to the cell inner membrane. Its function is as follows. Required for the insertion and/or proper folding and/or complex formation of integral membrane proteins into the membrane. Involved in integration of membrane proteins that insert both dependently and independently of the Sec translocase complex, as well as at least some lipoproteins. Aids folding of multispanning membrane proteins. In Haemophilus influenzae (strain ATCC 51907 / DSM 11121 / KW20 / Rd), this protein is Membrane protein insertase YidC.